The sequence spans 449 residues: L-seryl-tRNA(Sec) selenium transferase (449 aa).

Residue Lys286 is modified to N6-(pyridoxal phosphate)lysine.

Belongs to the SelA family. It depends on pyridoxal 5'-phosphate as a cofactor.

The protein resides in the cytoplasm. It carries out the reaction L-seryl-tRNA(Sec) + selenophosphate + H(+) = L-selenocysteinyl-tRNA(Sec) + phosphate. It participates in aminoacyl-tRNA biosynthesis; selenocysteinyl-tRNA(Sec) biosynthesis; selenocysteinyl-tRNA(Sec) from L-seryl-tRNA(Sec) (bacterial route): step 1/1. Functionally, converts seryl-tRNA(Sec) to selenocysteinyl-tRNA(Sec) required for selenoprotein biosynthesis. This chain is L-seryl-tRNA(Sec) selenium transferase, found in Sulfurimonas denitrificans (strain ATCC 33889 / DSM 1251) (Thiomicrospira denitrificans (strain ATCC 33889 / DSM 1251)).